Here is a 1027-residue protein sequence, read N- to C-terminus: INO80 complex subunit D (1027 aa).

K87 participates in a covalent cross-link: Glycyl lysine isopeptide (Lys-Gly) (interchain with G-Cter in SUMO2). Residue S132 is modified to Phosphoserine. 5 disordered regions span residues 193–278 (HFSP…VDPP), 519–574 (RGDN…LSMP), 813–850 (RQQY…HTTS), 914–969 (LSTS…TSPK), and 982–1027 (QLSS…PSPN). The span at 201–216 (SQQQPPQQHSHLSPLS) shows a compositional bias: low complexity. Over residues 229 to 257 (VCKSPQPQNTSLPMQGVAPTTHTIAQARQ) the composition is skewed to polar residues. Residues 525–559 (KVQHQQQRKPRKKTKPPALTKKHKKKRRRGPRRPQ) are compositionally biased toward basic residues. Positions 914 to 932 (LSTSLSTPPTTSNSETTQP) are enriched in low complexity. Residues 937–954 (VTPSSSSVLPGLPQTSFS) are compositionally biased toward polar residues. Residues 1001 to 1027 (APPTGFTVTGATATSTNNASSPFPSPN) are compositionally biased toward low complexity.

The protein belongs to the INO80D family. As to quaternary structure, component of the chromatin remodeling INO80 complex; specifically part of a complex module associated with the N-terminus of INO80.

The protein resides in the nucleus. Its function is as follows. Putative regulatory component of the chromatin remodeling INO80 complex which is involved in transcriptional regulation, DNA replication and probably DNA repair. The polypeptide is INO80 complex subunit D (Homo sapiens (Human)).